We begin with the raw amino-acid sequence, 744 residues long: Translation initiation factor IF-2, chloroplastic (744 aa).

The disordered stretch occupies residues 113–146 (NSEGSFKSGKQKKKEKGKHKQNVNKDIHHTKNNR). Basic residues predominate over residues 121 to 134 (GKQKKKEKGKHKQN). Positions 244 to 417 (NRAPIVTILG…CSLAEFINLK (174 aa)) constitute a tr-type G domain. The tract at residues 253–260 (GHVDHGKT) is G1. 253–260 (GHVDHGKT) is a GTP binding site. The G2 stretch occupies residues 278–282 (GITQS). The G3 stretch occupies residues 303–306 (DTPG). Residues 303 to 307 (DTPGH) and 357 to 360 (NKID) contribute to the GTP site. Residues 357–360 (NKID) form a G4 region. The G5 stretch occupies residues 393–395 (SAL).

It belongs to the TRAFAC class translation factor GTPase superfamily. Classic translation factor GTPase family. IF-2 subfamily.

The protein localises to the plastid. It is found in the chloroplast. Its function is as follows. One of the essential components for the initiation of protein synthesis. Protects formylmethionyl-tRNA from spontaneous hydrolysis and promotes its binding to the 30S ribosomal subunits. Also involved in the hydrolysis of GTP during the formation of the 70S ribosomal complex. This chain is Translation initiation factor IF-2, chloroplastic (infB), found in Gracilaria tenuistipitata var. liui (Red alga).